The chain runs to 870 residues: Protein translocase subunit SecA (870 aa).

ATP is bound by residues glutamine 86, 104-108 (GEGKT), and aspartate 499. Zn(2+)-binding residues include cysteine 854, cysteine 856, cysteine 865, and histidine 866.

It belongs to the SecA family. In terms of assembly, monomer and homodimer. Part of the essential Sec protein translocation apparatus which comprises SecA, SecYEG and auxiliary proteins SecDF-YajC and YidC. Zn(2+) is required as a cofactor.

The protein resides in the cell inner membrane. Its subcellular location is the cytoplasm. It carries out the reaction ATP + H2O + cellular proteinSide 1 = ADP + phosphate + cellular proteinSide 2.. Functionally, part of the Sec protein translocase complex. Interacts with the SecYEG preprotein conducting channel. Has a central role in coupling the hydrolysis of ATP to the transfer of proteins into and across the cell membrane, serving both as a receptor for the preprotein-SecB complex and as an ATP-driven molecular motor driving the stepwise translocation of polypeptide chains across the membrane. This chain is Protein translocase subunit SecA, found in Ehrlichia ruminantium (strain Welgevonden).